A 270-amino-acid chain; its full sequence is Interleukin-1 alpha (270 aa).

The propeptide occupies 1–112; sequence MAKVPDLFED…EVEEEIMKPR (112 aa). Position 82 is an N6-acetyllysine (Lys82). Residues 82–86 are nuclear localization signal (NLS); that stretch reads KKRRL. Position 87 is a phosphoserine (Ser87). A glycan (N-linked (GlcNAc...) asparagine) is linked at Asn139.

Belongs to the IL-1 family. As to quaternary structure, monomer. Interacts with TMED10; the interaction mediates the translocation from the cytoplasm into the ERGIC (endoplasmic reticulum-Golgi intermediate compartment) and thereby secretion. Interacts with IL1R1. Interacts with S100A13; this interaction is the first step in the export of IL1A, followed by direct translocation of this complex across the plasma membrane. Post-translationally, acetylated within its nuclear localization sequence, which impacts subcellular localization. In terms of processing, proteolytic processed by CAPN1 in a calcium-dependent manner. Cleavage from 31 kDa precursor to 18 kDa biologically active molecules. Phosphorylated. Phosphorylation greatly enhances susceptibility to digestion and promotes the conversion of pre-IL1A alpha to the biologically active IL1A.

It is found in the nucleus. The protein localises to the cytoplasm. Its subcellular location is the secreted. In terms of biological role, cytokine constitutively present intracellularly in nearly all resting non-hematopoietic cells that plays an important role in inflammation and bridges the innate and adaptive immune systems. After binding to its receptor IL1R1 together with its accessory protein IL1RAP, forms the high affinity interleukin-1 receptor complex. Signaling involves the recruitment of adapter molecules such as MYD88, IRAK1 or IRAK4. In turn, mediates the activation of NF-kappa-B and the three MAPK pathways p38, p42/p44 and JNK pathways. Within the cell, acts as an alarmin and cell death results in its liberation in the extracellular space after disruption of the cell membrane to induce inflammation and alert the host to injury or damage. In addition to its role as a danger signal, which occurs when the cytokine is passively released by cell necrosis, directly senses DNA damage and acts as signal for genotoxic stress without loss of cell integrity. The chain is Interleukin-1 alpha (IL1A) from Felis catus (Cat).